The sequence spans 243 residues: Pyridoxine 5'-phosphate synthase (243 aa).

Position 9 (asparagine 9) interacts with 3-amino-2-oxopropyl phosphate. 11–12 (DH) is a 1-deoxy-D-xylulose 5-phosphate binding site. Position 20 (arginine 20) interacts with 3-amino-2-oxopropyl phosphate. Histidine 45 functions as the Proton acceptor in the catalytic mechanism. 1-deoxy-D-xylulose 5-phosphate-binding residues include arginine 47 and histidine 52. Glutamate 72 (proton acceptor) is an active-site residue. A 1-deoxy-D-xylulose 5-phosphate-binding site is contributed by threonine 102. Histidine 193 acts as the Proton donor in catalysis. Residues glycine 194 and 215-216 (GH) contribute to the 3-amino-2-oxopropyl phosphate site.

This sequence belongs to the PNP synthase family. Homooctamer; tetramer of dimers.

It localises to the cytoplasm. The catalysed reaction is 3-amino-2-oxopropyl phosphate + 1-deoxy-D-xylulose 5-phosphate = pyridoxine 5'-phosphate + phosphate + 2 H2O + H(+). The protein operates within cofactor biosynthesis; pyridoxine 5'-phosphate biosynthesis; pyridoxine 5'-phosphate from D-erythrose 4-phosphate: step 5/5. Catalyzes the complicated ring closure reaction between the two acyclic compounds 1-deoxy-D-xylulose-5-phosphate (DXP) and 3-amino-2-oxopropyl phosphate (1-amino-acetone-3-phosphate or AAP) to form pyridoxine 5'-phosphate (PNP) and inorganic phosphate. This Escherichia coli O6:H1 (strain CFT073 / ATCC 700928 / UPEC) protein is Pyridoxine 5'-phosphate synthase.